The primary structure comprises 78 residues: Structural DNA-binding protein p10 (78 aa).

A compositionally biased stretch (low complexity) spans 1–24 (MPTKAGTKSTANKKTTKGSSKSGS). The tract at residues 1 to 41 (MPTKAGTKSTANKKTTKGSSKSGSPRGHTGKTHAPPSMHSG) is disordered.

This sequence belongs to the asfivirus P10 family.

The protein localises to the virion. May play a role in genome packaging through direct interaction with viral DNA. Binds to ssDNA and dsDNA with the same apparent affinity in vitro. This African swine fever virus (isolate Tick/South Africa/Pretoriuskop Pr4/1996) (ASFV) protein is Structural DNA-binding protein p10.